We begin with the raw amino-acid sequence, 311 residues long: GTPase Era (311 aa).

Positions 16-188 (HAGFVAIVGK…REQLLEVLPE (173 aa)) constitute an Era-type G domain. The G1 stretch occupies residues 24 to 31 (GKPNVGKS). Residue 24–31 (GKPNVGKS) coordinates GTP. Residues 50 to 54 (QTTRR) are G2. The interval 71–74 (DTPG) is G3. GTP contacts are provided by residues 71 to 75 (DTPGL) and 133 to 136 (NKTD). The segment at 133–136 (NKTD) is G4. The tract at residues 166–168 (LSA) is G5. The KH type-2 domain maps to 219-296 (LRDELPYAVA…YLGLEVIVIP (78 aa)).

It belongs to the TRAFAC class TrmE-Era-EngA-EngB-Septin-like GTPase superfamily. Era GTPase family. In terms of assembly, monomer.

Its subcellular location is the cytoplasm. It is found in the cell membrane. An essential GTPase that binds both GDP and GTP, with rapid nucleotide exchange. Plays a role in 16S rRNA processing and 30S ribosomal subunit biogenesis and possibly also in cell cycle regulation and energy metabolism. In Deinococcus radiodurans (strain ATCC 13939 / DSM 20539 / JCM 16871 / CCUG 27074 / LMG 4051 / NBRC 15346 / NCIMB 9279 / VKM B-1422 / R1), this protein is GTPase Era.